The sequence spans 297 residues: MAFQKDAKSSAYSSRFQTPFRRRREGKTDYYQRKRLVTQHKAKYNTPKYRLVVRFTNKDIICQIISSTITGDVVLAAAYSHELPRYGITHGLTNWAAAYATGLLIARRTLQKLGLDETYKGVEEVEGEYELTEAVEDGPRPFKVFLDIGLQRTTTGARVFGALKGASDGGLYVPHSENRFPGWDFETEEIDPELLRSYIFGGHVSQYMEELADDDEERFSELFKGYLADDIDADSLEDIYTSAHEAIRADPAFKPTEKKFTKEQYAAESKKYRQTKLSKEERAARVAAKIAALAGQQ.

Lys-164 is covalently cross-linked (Glycyl lysine isopeptide (Lys-Gly) (interchain with G-Cter in ubiquitin)). Residues Ser-167, Ser-176, and Ser-235 each carry the phosphoserine modification.

The protein belongs to the universal ribosomal protein uL18 family. As to quaternary structure, component of the large ribosomal subunit (LSU). Mature yeast ribosomes consist of a small (40S) and a large (60S) subunit. The 40S small subunit contains 1 molecule of ribosomal RNA (18S rRNA) and 33 different proteins (encoded by 57 genes). The large 60S subunit contains 3 rRNA molecules (25S, 5.8S and 5S rRNA) and 46 different proteins (encoded by 81 genes). Component of a hexameric 5S RNP precursor complex, composed of 5S RNA, RRS1, RPF2, RPL5, RPL11A/RPL11B and SYO1; this complex acts as a precursor for ribosome assembly. RPL5/uL18 forms a heterotrimeric complex with SYO1 and RPL11A/RPL11B/uL5. Interaction of this complex with KAP104 allows the nuclear import of the heterotrimer.

The protein resides in the cytoplasm. Its subcellular location is the nucleus. In terms of biological role, component of the ribosome, a large ribonucleoprotein complex responsible for the synthesis of proteins in the cell. The small ribosomal subunit (SSU) binds messenger RNAs (mRNAs) and translates the encoded message by selecting cognate aminoacyl-transfer RNA (tRNA) molecules. The large subunit (LSU) contains the ribosomal catalytic site termed the peptidyl transferase center (PTC), which catalyzes the formation of peptide bonds, thereby polymerizing the amino acids delivered by tRNAs into a polypeptide chain. The nascent polypeptides leave the ribosome through a tunnel in the LSU and interact with protein factors that function in enzymatic processing, targeting, and the membrane insertion of nascent chains at the exit of the ribosomal tunnel. This chain is Large ribosomal subunit protein uL18, found in Saccharomyces cerevisiae (strain ATCC 204508 / S288c) (Baker's yeast).